A 736-amino-acid polypeptide reads, in one-letter code: Segment polarity protein dishevelled homolog DVL-2 (736 aa).

The DIX domain occupies 1-82 (MAETKVIYHL…RVVSWLASSE (82 aa)). The disordered stretch occupies residues 79–241 (ASSEGSQPDS…PRLERTSSFS (163 aa)). Positions 100 to 114 (EPPPPVPPPIPPPPA) are enriched in pro residues. Residues 149–160 (MRRDRVRRRESS) are compositionally biased toward basic and acidic residues. A compositionally biased stretch (low complexity) spans 181–195 (ESSSTLLTSEIETSI). Polar residues predominate over residues 205–217 (SRFSSSTEQSSAS). Positions 219-231 (LLKRHRRRRKQRP) are enriched in basic residues. Positions 254–326 (TVTLNMEKYN…NDDAVRVLRD (73 aa)) constitute a PDZ domain. The tract at residues 327–427 (IVHKPGPIVL…LASVVKVMAS (101 aa)) is interaction with custos. One can recognise a DEP domain in the interval 428–502 (PESGLEVRDR…SEQCYYIFGD (75 aa)). 2 stretches are compositionally biased toward low complexity: residues 574–593 (MGSA…SNRS) and 616–629 (KSGS…STRS). The interval 574-664 (MGSAGSQHSE…HPPSVHSYAA (91 aa)) is disordered.

The protein belongs to the DSH family. In terms of assembly, can form homomultimers. Interacts with prickle1. Interacts (via PDZ domain) with ccdc88c/dal and dact1-B/dpr. Interacts (via DIX domain) with ARP/Axin-related protein and dact1-A/frodo. Interacts with sdc4, possibly via fz7. Interacts directly (via DEP domain) with efnb1/ephrin-B1 and indirectly with the phosphorylated ephrin receptors ephb1 and ephb2, via association with SH domain-containing adapters. May interact with lrrc6. Interacts with custos (via NLS1 and NLS2); the interaction is negatively regulated by Wnt stimulation. Phosphorylated. Phosphorylation is controlled by frizzled proteins, correlates with the onset of embryo dorsalizing events and is higher in the dorsal half of early cleavage embryos. Phosphorylated on tyrosine residues in response to association with efnb1/ephrin-B1. In terms of tissue distribution, expressed equally in both animal-vegetal and dorsal-ventral directions of the early blastula. Becomes enriched on the dorsal side of the embryo after cortical rotation. Expressed along the anterior margin of eye field of neurulae (stage 16 embryos) and in the anterolateral crescent that borders the eye field. Continues to be expressed in the optic cup at stage 26. Expressed in the central nervous system throughout the early tailbud stage including the entire hindbrain.

Its subcellular location is the cytoplasm. The protein resides in the cytoplasmic vesicle. The protein localises to the cell projection. It is found in the cilium. It localises to the nucleus. Its subcellular location is the cell membrane. Involved in at least 2 independent signaling cascades, controlling cell fate via canonical Wnt signaling and cell polarity via a planar cell polarity (PCP) cascade. Acts synergistically with dal/dapple-like to activate Wnt signaling, stabilizing ctnnb1/beta-catenin and leading to dorsal axis formation. Also prevents degradation of ctnnb1/beta-catenin by displacing gsk3 from a complex with ARP/Axin-related protein. Has an additional role in anterior-posterior (A/P) axis formation, specifying different neuroectodermal cell fates along the A/P axis in a dose-dependent manner by activating several early patterning genes. In the PCP pathway, required at the cell membrane for PCP-mediated neural and mesodermal convergent extension during gastrulation and subsequent neural tube closure, acting to activate jnk. Also involved in blastopore closure and archenteron elongation during early, but not late, gastrulation. Associates with ephrin receptors and ligands and acts as part of a downstream PCP pathway to mediate ephrin-mediated cell repulsion via activation of rhoa. Required for efnb1/ephrin-B1-driven movement of non-retinal progenitor cells into the retina during eye field formation. Patterns the hindbrain. Required for ciliogenesis. Controls the docking of basal bodies to the apical plasma membrane; mediates the activation, but not localization of rhoa at the apical surface of ciliated cells during basal body docking. Furthermore, required for the association of basal bodies with membrane-bound vesicles and the vesicle-trafficking protein exoc4/sec8, and this association is in turn required for basal body docking. Once basal bodies are docked, required for the planar polarization of basal bodies that underlies ciliary beating and the directional fluid flow across ciliated epithelia. This is Segment polarity protein dishevelled homolog DVL-2 (dvl2) from Xenopus laevis (African clawed frog).